Consider the following 700-residue polypeptide: Polyribonucleotide nucleotidyltransferase (700 aa).

2 residues coordinate Mg(2+): D485 and D491. Residues 552–611 enclose the KH domain; sequence PRITTLKINPEKIRDVIGKGGATIRALTEETGTTIELEDDGTVKIASANGDATKEAIRRI. The 69-residue stretch at 621–689 folds into the S1 motif domain; the sequence is GTVYNGKVVR…RQGRVRLSMK (69 aa).

The protein belongs to the polyribonucleotide nucleotidyltransferase family. As to quaternary structure, component of the RNA degradosome, which is a multiprotein complex involved in RNA processing and mRNA degradation. Requires Mg(2+) as cofactor.

It is found in the cytoplasm. The enzyme catalyses RNA(n+1) + phosphate = RNA(n) + a ribonucleoside 5'-diphosphate. Functionally, involved in mRNA degradation. Catalyzes the phosphorolysis of single-stranded polyribonucleotides processively in the 3'- to 5'-direction. The sequence is that of Polyribonucleotide nucleotidyltransferase from Shewanella loihica (strain ATCC BAA-1088 / PV-4).